The primary structure comprises 136 residues: Large ribosomal subunit protein eL27 (136 aa).

Residues M5–R36 form the KOW domain.

Belongs to the eukaryotic ribosomal protein eL27 family. As to quaternary structure, component of the large ribosomal subunit.

It localises to the cytoplasm. Its subcellular location is the cytosol. The protein resides in the rough endoplasmic reticulum. Component of the large ribosomal subunit. The protein is Large ribosomal subunit protein eL27 (rpl-27) of Caenorhabditis elegans.